The chain runs to 138 residues: Acidic phospholipase A2 Cvv-E6e (138 aa).

An N-terminal signal peptide occupies residues M1 to G16. Disulfide bonds link C42–C131, C44–C60, C59–C111, C65–C138, C66–C104, C73–C97, and C91–C102. Positions 43, 45, and 47 each coordinate Ca(2+). Residue H63 is part of the active site. Residue D64 coordinates Ca(2+). The active site involves D105.

The cofactor is Ca(2+). In terms of tissue distribution, expressed by the venom gland.

It is found in the secreted. It carries out the reaction a 1,2-diacyl-sn-glycero-3-phosphocholine + H2O = a 1-acyl-sn-glycero-3-phosphocholine + a fatty acid + H(+). Snake venom phospholipase A2 (PLA2) that significantly inhibits ADP-induced platelet aggregation in platelet-rich plasma of human, rabbit and guinea pig. PLA2 catalyzes the calcium-dependent hydrolysis of the 2-acyl groups in 3-sn-phosphoglycerides. The polypeptide is Acidic phospholipase A2 Cvv-E6e (Crotalus viridis viridis (Prairie rattlesnake)).